The primary structure comprises 405 residues: F-box/kelch-repeat protein At2g43445 (405 aa).

One can recognise an F-box domain in the interval 7 to 53 (NTNSIYIVSELLEEIFLGLPLKSILKFKTVSKQWRSILESNLFVERR). Kelch repeat units follow at residues 146-197 (RDKV…CVNG) and 356-400 (THHD…VVGY).

This Arabidopsis thaliana (Mouse-ear cress) protein is F-box/kelch-repeat protein At2g43445.